A 267-amino-acid chain; its full sequence is Lectin SfL-2 (267 aa).

Repeat copies occupy residues 1–67, 68–135, 136–202, and 203–267. Positions 1 to 267 are 4 X approximate tandem repeats; that stretch reads GRYTVQNQWG…GPIGFKGVAN (267 aa).

Monomer.

Its function is as follows. Lectin specific for high mannose N-glycans, recognizes the branched moiety of these glycans. Does not recognize other types of N-glycans or monosaccharides. This chain is Lectin SfL-2, found in Solieria filiformis (Red alga).